The primary structure comprises 229 residues: Cytochrome c oxidase subunit 2 (229 aa).

Topologically, residues 1–14 (MPTPNQTNFQDAAS) are mitochondrial intermembrane. Residues 15-45 (PLMEELTHFHDHTLMIVFMISLLVLYILLSM) traverse the membrane as a helical segment. Over 46-59 (LSTKLTHTNTANAQ) the chain is Mitochondrial matrix. Residues 60–87 (QAEMVWTILPAIILITIALPSLQILYMM) traverse the membrane as a helical segment. Residues 88–229 (DEINKPHMTI…DLWLAMIDTL (142 aa)) lie on the Mitochondrial intermembrane side of the membrane. Cu cation is bound by residues H161, C196, E198, C200, H204, and M207. E198 contacts Mg(2+).

Belongs to the cytochrome c oxidase subunit 2 family. As to quaternary structure, component of the cytochrome c oxidase (complex IV, CIV), a multisubunit enzyme composed of 14 subunits. The complex is composed of a catalytic core of 3 subunits MT-CO1, MT-CO2 and MT-CO3, encoded in the mitochondrial DNA, and 11 supernumerary subunits COX4I, COX5A, COX5B, COX6A, COX6B, COX6C, COX7A, COX7B, COX7C, COX8 and NDUFA4, which are encoded in the nuclear genome. The complex exists as a monomer or a dimer and forms supercomplexes (SCs) in the inner mitochondrial membrane with NADH-ubiquinone oxidoreductase (complex I, CI) and ubiquinol-cytochrome c oxidoreductase (cytochrome b-c1 complex, complex III, CIII), resulting in different assemblies (supercomplex SCI(1)III(2)IV(1) and megacomplex MCI(2)III(2)IV(2)). Found in a complex with TMEM177, COA6, COX18, COX20, SCO1 and SCO2. Interacts with TMEM177 in a COX20-dependent manner. Interacts with COX20. Interacts with COX16. Cu cation serves as cofactor.

The protein resides in the mitochondrion inner membrane. It catalyses the reaction 4 Fe(II)-[cytochrome c] + O2 + 8 H(+)(in) = 4 Fe(III)-[cytochrome c] + 2 H2O + 4 H(+)(out). Functionally, component of the cytochrome c oxidase, the last enzyme in the mitochondrial electron transport chain which drives oxidative phosphorylation. The respiratory chain contains 3 multisubunit complexes succinate dehydrogenase (complex II, CII), ubiquinol-cytochrome c oxidoreductase (cytochrome b-c1 complex, complex III, CIII) and cytochrome c oxidase (complex IV, CIV), that cooperate to transfer electrons derived from NADH and succinate to molecular oxygen, creating an electrochemical gradient over the inner membrane that drives transmembrane transport and the ATP synthase. Cytochrome c oxidase is the component of the respiratory chain that catalyzes the reduction of oxygen to water. Electrons originating from reduced cytochrome c in the intermembrane space (IMS) are transferred via the dinuclear copper A center (CU(A)) of subunit 2 and heme A of subunit 1 to the active site in subunit 1, a binuclear center (BNC) formed by heme A3 and copper B (CU(B)). The BNC reduces molecular oxygen to 2 water molecules using 4 electrons from cytochrome c in the IMS and 4 protons from the mitochondrial matrix. This is Cytochrome c oxidase subunit 2 (MT-CO2) from Pelomedusa subrufa (African side-necked turtle).